Here is a 377-residue protein sequence, read N- to C-terminus: Citrate synthase (377 aa).

Residues H258 and D313 contribute to the active site.

Belongs to the citrate synthase family. As to quaternary structure, homodimer. Post-translationally, the N-terminus is blocked by acetylation.

The catalysed reaction is oxaloacetate + acetyl-CoA + H2O = citrate + CoA + H(+). It functions in the pathway carbohydrate metabolism; tricarboxylic acid cycle; isocitrate from oxaloacetate: step 1/2. Allosterically inhibited by NADH. This Saccharolobus solfataricus (strain ATCC 35092 / DSM 1617 / JCM 11322 / P2) (Sulfolobus solfataricus) protein is Citrate synthase (gltA).